Reading from the N-terminus, the 560-residue chain is Trans-activating transcriptional regulatory protein (560 aa).

Disordered stretches follow at residues 1–25 (MPKN…LFNN) and 99–134 (TGAE…LVNK).

This sequence belongs to the nucleopolyhedrovirus IE-1 protein family.

Functionally, regulatory transcriptional protein, which trans-activates gene expression from early baculovirus promoters. Can also trans-activate its own promoter, suggesting that it is autoregulated during normal infection of insect cells. This Orgyia pseudotsugata (Douglas-fir tussock moth) protein is Trans-activating transcriptional regulatory protein (IE1).